Here is a 905-residue protein sequence, read N- to C-terminus: Patched domain-containing protein 3 (905 aa).

Residues 1–67 (MISSKVAPGE…PVGQEAPPPR (67 aa)) form a disordered region. The helical transmembrane segment at 94-114 (WLFLLGPVLLTASLGTGLIFL) threads the bilayer. Residues N146, N199, N229, and N233 are each glycosylated (N-linked (GlcNAc...) asparagine). 6 helical membrane passes run 337 to 357 (TVIP…VVSC), 369 to 389 (VAVF…GLML), 391 to 411 (IGVP…GVGV), 441 to 461 (VAVS…TGIT), 475 to 495 (GTTL…IMAL), and 558 to 578 (FIVV…CFQV). The region spanning 338–495 (VIPLFHLAYI…ITCFGAIMAL (158 aa)) is the SSD domain. N-linked (GlcNAc...) asparagine glycans are attached at residues N647, N661, and N692. Transmembrane regions (helical) follow at residues 759 to 779 (VMIA…HPVC), 781 to 801 (LWVT…MAFW), 813 to 833 (LVIC…AFVS), 849 to 869 (LLGY…CVLA), and 882 to 902 (IMFL…PVFL).

It belongs to the patched family. As to expression, expressed in germ cells of the testis (at protein level).

The protein resides in the cell projection. The protein localises to the cilium. It is found in the flagellum membrane. It localises to the endoplasmic reticulum membrane. May play a role in sperm development or sperm function. However, does not appear to have an essential role in spermatogenesis or male fertility. The protein is Patched domain-containing protein 3 of Rattus norvegicus (Rat).